An 896-amino-acid polypeptide reads, in one-letter code: DNA mismatch repair protein MutS (896 aa).

Residue 599 to 606 (GPNMAGKS) coordinates ATP.

It belongs to the DNA mismatch repair MutS family.

This protein is involved in the repair of mismatches in DNA. It is possible that it carries out the mismatch recognition step. This protein has a weak ATPase activity. In Geobacillus kaustophilus (strain HTA426), this protein is DNA mismatch repair protein MutS.